The sequence spans 485 residues: Argininosuccinate lyase (485 aa).

This sequence belongs to the lyase 1 family. Argininosuccinate lyase subfamily.

The protein resides in the cytoplasm. It catalyses the reaction 2-(N(omega)-L-arginino)succinate = fumarate + L-arginine. It functions in the pathway amino-acid biosynthesis; L-arginine biosynthesis; L-arginine from L-ornithine and carbamoyl phosphate: step 3/3. This chain is Argininosuccinate lyase, found in Paracidovorax citrulli (strain AAC00-1) (Acidovorax citrulli).